The primary structure comprises 301 residues: GTPase Era (301 aa).

The Era-type G domain maps to 7–175 (YCGFIAIVGR…AGIVRKHLPE (169 aa)). Positions 15–22 (GRPNVGKS) are G1. Residue 15 to 22 (GRPNVGKS) participates in GTP binding. The segment at 41–45 (QTTRH) is G2. Residues 62 to 65 (DTPG) are G3. GTP contacts are provided by residues 62–66 (DTPGL) and 124–127 (NKVD). Positions 124–127 (NKVD) are G4. The segment at 154 to 156 (ISA) is G5. A KH type-2 domain is found at 206-283 (LGAELPYSVT…HLELWVKVKS (78 aa)).

This sequence belongs to the TRAFAC class TrmE-Era-EngA-EngB-Septin-like GTPase superfamily. Era GTPase family. As to quaternary structure, monomer.

The protein resides in the cytoplasm. It localises to the cell inner membrane. Its function is as follows. An essential GTPase that binds both GDP and GTP, with rapid nucleotide exchange. Plays a role in 16S rRNA processing and 30S ribosomal subunit biogenesis and possibly also in cell cycle regulation and energy metabolism. This is GTPase Era from Salmonella agona (strain SL483).